The following is a 151-amino-acid chain: Large ribosomal subunit protein bL9 (151 aa).

The protein belongs to the bacterial ribosomal protein bL9 family.

Binds to the 23S rRNA. The polypeptide is Large ribosomal subunit protein bL9 (Pseudothermotoga lettingae (strain ATCC BAA-301 / DSM 14385 / NBRC 107922 / TMO) (Thermotoga lettingae)).